The sequence spans 566 residues: Probable F-box protein At5g39490 (566 aa).

In terms of domain architecture, F-box spans A8 to Q54. The interval L318–N338 is disordered. Residues K320–S332 are compositionally biased toward low complexity.

In Arabidopsis thaliana (Mouse-ear cress), this protein is Probable F-box protein At5g39490.